The chain runs to 300 residues: Pleckstrin homology domain-containing family A member 3 (300 aa).

One can recognise a PH domain in the interval 1 to 93 (MEGVLYKWTN…WLVALGSSKA (93 aa)). Residues 1–100 (MEGVLYKWTN…SKACLTDTRT (100 aa)) are interaction with SACM1L. An interaction with VAPA and VAPB region spans residues 97–300 (DTRTKKEKEI…SEDTLPSFSS (204 aa)). A disordered region spans residues 197–300 (PVSPSPVQMM…SEDTLPSFSS (104 aa)). 2 positions are modified to phosphoserine: Ser-236 and Ser-244. The segment covering 279 to 290 (EESRLMAKKQSE) has biased composition (basic and acidic residues).

In terms of assembly, interacts with GTP-bound ARF1. Interacts with SACM1L and VAPA and/or VAPB to form a ternary complex. In terms of tissue distribution, widely expressed.

The protein resides in the golgi apparatus. It is found in the trans-Golgi network membrane. Its function is as follows. Plays a role in regulation of vesicular cargo transport from the trans-Golgi network (TGN) to the plasma membrane. Regulates Golgi phosphatidylinositol 4-phosphate (PtdIns(4)P) levels and activates the PtdIns(4)P phosphatase activity of SACM1L when it binds PtdIns(4)P in 'trans' configuration. Binds preferentially to PtdIns(4)P. Negatively regulates APOB secretion from hepatocytes. The protein is Pleckstrin homology domain-containing family A member 3 (PLEKHA3) of Homo sapiens (Human).